The sequence spans 193 residues: 3-isopropylmalate dehydratase small subunit (193 aa).

Belongs to the LeuD family. LeuD type 1 subfamily. In terms of assembly, heterodimer of LeuC and LeuD.

It catalyses the reaction (2R,3S)-3-isopropylmalate = (2S)-2-isopropylmalate. It participates in amino-acid biosynthesis; L-leucine biosynthesis; L-leucine from 3-methyl-2-oxobutanoate: step 2/4. Catalyzes the isomerization between 2-isopropylmalate and 3-isopropylmalate, via the formation of 2-isopropylmaleate. The sequence is that of 3-isopropylmalate dehydratase small subunit from Bacillus cereus (strain ZK / E33L).